Reading from the N-terminus, the 393-residue chain is Branched-chain-amino-acid aminotransferase, mitochondrial (393 aa).

A mitochondrion-targeting transit peptide spans Met1–Cys27. Residue Tyr169 participates in substrate binding. An N6-(pyridoxal phosphate)lysine modification is found at Lys230. Residue Lys322 is modified to N6-acetyllysine.

It belongs to the class-IV pyridoxal-phosphate-dependent aminotransferase family. In terms of assembly, homodimer. The cofactor is pyridoxal 5'-phosphate.

It localises to the mitochondrion. It carries out the reaction L-leucine + 2-oxoglutarate = 4-methyl-2-oxopentanoate + L-glutamate. It catalyses the reaction L-isoleucine + 2-oxoglutarate = (S)-3-methyl-2-oxopentanoate + L-glutamate. The catalysed reaction is L-valine + 2-oxoglutarate = 3-methyl-2-oxobutanoate + L-glutamate. Functionally, catalyzes the first reaction in the catabolism of the essential branched chain amino acids leucine, isoleucine, and valine. May also function as a transporter of branched chain alpha-keto acids. The protein is Branched-chain-amino-acid aminotransferase, mitochondrial (Bcat2) of Mus musculus (Mouse).